Reading from the N-terminus, the 283-residue chain is tRNA pseudouridine synthase B (283 aa).

Catalysis depends on Asp38, which acts as the Nucleophile.

The protein belongs to the pseudouridine synthase TruB family. Type 1 subfamily.

The catalysed reaction is uridine(55) in tRNA = pseudouridine(55) in tRNA. Its function is as follows. Responsible for synthesis of pseudouridine from uracil-55 in the psi GC loop of transfer RNAs. The protein is tRNA pseudouridine synthase B of Onion yellows phytoplasma (strain OY-M).